Consider the following 289-residue polypeptide: Urease accessory protein UreD (289 aa).

This sequence belongs to the UreD family. UreD, UreF and UreG form a complex that acts as a GTP-hydrolysis-dependent molecular chaperone, activating the urease apoprotein by helping to assemble the nickel containing metallocenter of UreC. The UreE protein probably delivers the nickel.

Its subcellular location is the cytoplasm. In terms of biological role, required for maturation of urease via the functional incorporation of the urease nickel metallocenter. This chain is Urease accessory protein UreD, found in Cupriavidus pinatubonensis (strain JMP 134 / LMG 1197) (Cupriavidus necator (strain JMP 134)).